The following is a 900-amino-acid chain: 3'-5' exonuclease DinG (900 aa).

The Exonuclease domain occupies 8–161 (VVDLETTGNQ…DEDATTTALL (154 aa)). A Helicase ATP-binding domain is found at 241 to 496 (SEVVKSLNLT…KAIDKLEQQR (256 aa)). Position 276 to 283 (276 to 283 (APLGSGKS)) interacts with ATP. A DEAH box motif is present at residues 448–451 (DEAH). Positions 713–893 (DYIQEYVTIT…QFSKLVNKIQ (181 aa)) constitute a Helicase C-terminal domain.

It belongs to the helicase family. DinG subfamily. Type 2 sub-subfamily.

Its function is as follows. 3'-5' exonuclease. In Staphylococcus haemolyticus (strain JCSC1435), this protein is 3'-5' exonuclease DinG.